The chain runs to 327 residues: MSHLAELVAQAKAAVESAQDVAALDSVRVEFLGKKGHLTLQMTSLRNLPAEERPAAGAVINQAKQEVQEALNARKAALESVALNARLAEETIDVSLPGRRMENGGLHPVTRTIERIESFFSELGFAVATGPEIEDDYHNFDALNIPAHHPARADHDTFWFDATRLLRTQTSGVQIRTMQQQQPPIRIIAPGRVYRNDYDQTHTPMFHQMEGLIVDKDISFTNLKGTLHDFLRNFFEQDLQIRFRPSYFPFTEPSAEVDVMGKNGKWLEVLGCGMVHPNVLRNVGIDPQVYSGFAFGMGMERLTMLRYGVTDLRAFFENDLRFLKQFK.

Residue glutamate 252 coordinates Mg(2+).

It belongs to the class-II aminoacyl-tRNA synthetase family. Phe-tRNA synthetase alpha subunit type 1 subfamily. Tetramer of two alpha and two beta subunits. It depends on Mg(2+) as a cofactor.

The protein resides in the cytoplasm. It carries out the reaction tRNA(Phe) + L-phenylalanine + ATP = L-phenylalanyl-tRNA(Phe) + AMP + diphosphate + H(+). The sequence is that of Phenylalanine--tRNA ligase alpha subunit from Edwardsiella ictaluri (strain 93-146).